Consider the following 354-residue polypeptide: Sulfate/thiosulfate import ATP-binding protein CysA 2 (354 aa).

The region spanning 3 to 237 (IHIQQVNKHF…PSNPFVYEFL (235 aa)) is the ABC transporter domain. Position 35–42 (35–42 (GPSGSGKT)) interacts with ATP.

Belongs to the ABC transporter superfamily. Sulfate/tungstate importer (TC 3.A.1.6) family. As to quaternary structure, the complex is composed of two ATP-binding proteins (CysA), two transmembrane proteins (CysT and CysW) and a solute-binding protein (CysP).

It is found in the cell inner membrane. It carries out the reaction sulfate(out) + ATP + H2O = sulfate(in) + ADP + phosphate + H(+). It catalyses the reaction thiosulfate(out) + ATP + H2O = thiosulfate(in) + ADP + phosphate + H(+). Functionally, part of the ABC transporter complex CysAWTP involved in sulfate/thiosulfate import. Responsible for energy coupling to the transport system. This chain is Sulfate/thiosulfate import ATP-binding protein CysA 2, found in Shewanella oneidensis (strain ATCC 700550 / JCM 31522 / CIP 106686 / LMG 19005 / NCIMB 14063 / MR-1).